We begin with the raw amino-acid sequence, 453 residues long: Cysteine desulfurase, mitochondrial (453 aa).

A mitochondrion-targeting transit peptide spans 1 to 34 (MASKVISATIRRTLTKPHGTFSRCRYLSTAAAAT). Pyridoxal 5'-phosphate contacts are provided by residues 123–124 (AT), Asn203, Gln231, and 251–253 (SAH). Lys254 carries the post-translational modification N6-(pyridoxal phosphate)lysine. Thr291 provides a ligand contact to pyridoxal 5'-phosphate. Cys377 functions as the Cysteine persulfide intermediate in the catalytic mechanism. Cys377 serves as a coordination point for [2Fe-2S] cluster.

The protein belongs to the class-V pyridoxal-phosphate-dependent aminotransferase family. NifS/IscS subfamily. Interacts with FH. Interacts with SUFE1. It depends on pyridoxal 5'-phosphate as a cofactor.

The protein localises to the mitochondrion. The enzyme catalyses (sulfur carrier)-H + L-cysteine = (sulfur carrier)-SH + L-alanine. Its activity is regulated as follows. Threefold increase in the catalytic activity in the presence of FH (frataxin). 30-fold increase in the catalytic activity in the presence of SUFE1. In terms of biological role, catalyzes the removal of elemental sulfur from cysteine to produce alanine. Supplies the inorganic sulfur for iron-sulfur (Fe-S) clusters. This is Cysteine desulfurase, mitochondrial from Arabidopsis thaliana (Mouse-ear cress).